Reading from the N-terminus, the 183-residue chain is Myelin-associated oligodendrocyte basic protein (183 aa).

The segment at Thr68 to Trp183 is disordered. Residues Arg69 to Gln78 are compositionally biased toward basic residues. Over residues Arg79 to Lys96 the composition is skewed to low complexity. Repeat copies occupy residues Pro97 to Gln106, Pro107 to Gln116, Pro117 to Gln126, and Pro127 to Gln136. A 4 X 10 AA tandem repeats of P-R-S-P-P-R-S-E-R-Q region spans residues Pro97 to Gln136. Ser99 and Ser109 each carry phosphoserine. The segment covering Pro101–Val143 has biased composition (basic and acidic residues). Positions Arg151–Pro164 are enriched in low complexity.

The protein localises to the cytoplasm. It is found in the perinuclear region. May play a role in compacting or stabilizing the myelin sheath, possibly by binding the negatively charged acidic phospholipids of the cytoplasmic membrane. This chain is Myelin-associated oligodendrocyte basic protein (MOBP), found in Homo sapiens (Human).